Consider the following 309-residue polypeptide: Polyprenal reductase (309 aa).

Residues 1–3 (MFH) lie on the Cytoplasmic side of the membrane. A helical membrane pass occupies residues 4–24 (ILSIVNIIWLLLALCFGAAFC). Residues 25-67 (LNKFSVKLPNRVEHVFQDFIRYGKTKENIKRASWQLVFDLSKR) are Lumenal-facing. The helical transmembrane segment at 68-88 (YFYHFYVVSVMWNGLLLLFSI) threads the bilayer. At 89–114 (RSVVMSEAFPDWIIDVLGSLTGRSRG) the chain is on the cytoplasmic side. The chain crosses the membrane as a helical span at residues 115–135 (AWNEIHLSTLLLQVLLWVHTL). The Lumenal portion of the chain corresponds to 136 to 150 (RRLLECLFVSVFSDG). Residues 151 to 171 (VINVVQYAFGLSYYIILGLTV) traverse the membrane as a helical segment. Topologically, residues 172–185 (LCTNDSLPQSESVS) are cytoplasmic. Residues 186–206 (FFNQLTWYHVVGTLLFFWASF) traverse the membrane as a helical segment. Residues 207–255 (LQHQSLSLLAKMRTDSSGKVETLAHKMPCGGWFELVSCPHYLAELLIYA) lie on the Lumenal side of the membrane. The chain crosses the membrane as a helical span at residues 256 to 276 (AMCVCCGCASLTWWMVVLYVL). The Cytoplasmic segment spans residues 277-309 (CNQALAAQLCHEYYRSKFKTYPHHRKAFIPFVL).

Belongs to the steroid 5-alpha reductase family. Polyprenal reductase subfamily.

The protein resides in the endoplasmic reticulum membrane. It catalyses the reaction a di-trans,poly-cis-dolichal + NADP(+) = a di-trans,poly-cis-polyprenal + NADPH + H(+). The catalysed reaction is a 3-oxo-5alpha-steroid + NADP(+) = a 3-oxo-Delta(4)-steroid + NADPH + H(+). The enzyme catalyses androst-4-ene-3,17-dione + NADPH + H(+) = 5alpha-androstan-3,17-dione + NADP(+). It carries out the reaction 17beta-hydroxy-5alpha-androstan-3-one + NADP(+) = testosterone + NADPH + H(+). Its pathway is protein modification; protein glycosylation. Its function is as follows. Plays a key role in early steps of protein N-linked glycosylation by being involved in the conversion of polyprenol into dolichol. Acts as a polyprenal reductase that mediates the reduction of polyprenal into dolichal in a NADP-dependent mechanism. Dolichols are required for the synthesis of dolichol-linked monosaccharides and the oligosaccharide precursor used for N-glycosylation. Also able to convert testosterone (T) into 5-alpha-dihydrotestosterone (DHT). This Danio rerio (Zebrafish) protein is Polyprenal reductase (srd5a3).